Here is a 233-residue protein sequence, read N- to C-terminus: Nickel import system ATP-binding protein NikE (233 aa).

One can recognise an ABC transporter domain in the interval 2–228 (IELKHVTFGY…DRHPYTKELV (227 aa)). An ATP-binding site is contributed by 35 to 42 (GESGCGKS).

It belongs to the ABC transporter superfamily. As to quaternary structure, the complex is composed of two ATP-binding proteins (NikD and NikE), two transmembrane proteins (NikB and NikC) and a solute-binding protein (NikA).

It is found in the cell membrane. It carries out the reaction Ni(2+)(out) + ATP + H2O = Ni(2+)(in) + ADP + phosphate + H(+). Functionally, part of the ABC transporter complex NikABCDE (Opp2) involved in nickel import. Probably responsible for energy coupling to the transport system. The protein is Nickel import system ATP-binding protein NikE of Staphylococcus aureus (strain Mu50 / ATCC 700699).